A 40-amino-acid chain; its full sequence is Dolichyl-diphosphooligosaccharide--protein glycosyltransferase subunit 4 (40 aa).

The Lumenal segment spans residues 1–4 (MITD). A helical transmembrane segment spans residues 5–25 (VQLAIFSNVLGVFLFLLVVAY). The Cytoplasmic portion of the chain corresponds to 26 to 40 (HYINANTGKSIIKSK).

It belongs to the OST4 family. As to quaternary structure, component of the oligosaccharyltransferase (OST) complex.

Its subcellular location is the endoplasmic reticulum membrane. Its function is as follows. Subunit of the oligosaccharyl transferase (OST) complex that catalyzes the initial transfer of a defined glycan (Glc(3)Man(9)GlcNAc(2) in eukaryotes) from the lipid carrier dolichol-pyrophosphate to an asparagine residue within an Asn-X-Ser/Thr consensus motif in nascent polypeptide chains, the first step in protein N-glycosylation. N-glycosylation occurs cotranslationally and the complex associates with the Sec61 complex at the channel-forming translocon complex that mediates protein translocation across the endoplasmic reticulum (ER). All subunits are required for a maximal enzyme activity. This chain is Dolichyl-diphosphooligosaccharide--protein glycosyltransferase subunit 4, found in Drosophila grimshawi (Hawaiian fruit fly).